A 199-amino-acid chain; its full sequence is ATP-dependent Clp protease proteolytic subunit (199 aa).

Catalysis depends on S98, which acts as the Nucleophile. H123 is an active-site residue.

This sequence belongs to the peptidase S14 family. In terms of assembly, fourteen ClpP subunits assemble into 2 heptameric rings which stack back to back to give a disk-like structure with a central cavity, resembling the structure of eukaryotic proteasomes.

The protein resides in the cytoplasm. It carries out the reaction Hydrolysis of proteins to small peptides in the presence of ATP and magnesium. alpha-casein is the usual test substrate. In the absence of ATP, only oligopeptides shorter than five residues are hydrolyzed (such as succinyl-Leu-Tyr-|-NHMec, and Leu-Tyr-Leu-|-Tyr-Trp, in which cleavage of the -Tyr-|-Leu- and -Tyr-|-Trp bonds also occurs).. Its function is as follows. Cleaves peptides in various proteins in a process that requires ATP hydrolysis. Has a chymotrypsin-like activity. Plays a major role in the degradation of misfolded proteins. In Ehrlichia chaffeensis (strain ATCC CRL-10679 / Arkansas), this protein is ATP-dependent Clp protease proteolytic subunit.